Here is a 180-residue protein sequence, read N- to C-terminus: Probable Brix domain-containing ribosomal biogenesis protein (180 aa).

Positions 1–178 (MTTSRRPSPR…KPAEMVKRGR (178 aa)) constitute a Brix domain.

In terms of biological role, probably involved in the biogenesis of the ribosome. The protein is Probable Brix domain-containing ribosomal biogenesis protein of Aeropyrum pernix (strain ATCC 700893 / DSM 11879 / JCM 9820 / NBRC 100138 / K1).